The primary structure comprises 89 residues: MATVIAKVKVMPTSPEVEKEALKETLKELVENNDAKCRGVSDEPLAFGLYTVFVMVEMEEKEGGMDPIEEAMNALENVESAEVVELSLV.

It belongs to the EF-1-beta/EF-1-delta family.

Its function is as follows. Promotes the exchange of GDP for GTP in EF-1-alpha/GDP, thus allowing the regeneration of EF-1-alpha/GTP that could then be used to form the ternary complex EF-1-alpha/GTP/AAtRNA. In Methanococcus maripaludis (strain C5 / ATCC BAA-1333), this protein is Elongation factor 1-beta.